A 297-amino-acid polypeptide reads, in one-letter code: NADPH-dependent 1-acyldihydroxyacetone phosphate reductase (297 aa).

Positions 16-20 match the GXSXG motif; the sequence is GASGG. S18 (nucleophile; for lipase activity) is an active-site residue. NADP(+) is bound by residues I21, D64, N93, R126, Y157, K161, V190, and T192. Y157 acts as the Proton acceptor in catalysis. Residue K161 is the Lowers pKa of active site Tyr of the active site.

It belongs to the short-chain dehydrogenases/reductases (SDR) family.

It is found in the lipid droplet. The protein resides in the mitochondrion outer membrane. It localises to the endoplasmic reticulum. It catalyses the reaction a 1-acylglycerone 3-phosphate + NADPH + H(+) = a 1-acyl-sn-glycero-3-phosphate + NADP(+). The enzyme catalyses 1-hexadecanoyl-sn-glycero-3-phosphate + NADP(+) = 1-hexadecanoylglycerone 3-phosphate + NADPH + H(+). The catalysed reaction is a triacylglycerol + H2O = a diacylglycerol + a fatty acid + H(+). It carries out the reaction 1,2,3-tri-(9Z-octadecenoyl)-glycerol + H2O = di-(9Z)-octadecenoylglycerol + (9Z)-octadecenoate + H(+). Its activity is regulated as follows. Inhibited by divalent cations and N-ethylmaleimide. Activity is reduced under anaerobic growth conditions. Its function is as follows. Can convert acyl and alkyl dihydroxyacetone-phosphate (DHAP) into glycerolipids and ether lipids, respectively. Required for the biosynthesis of phosphatidic acid via the DHAP pathway, where it reduces 1-acyl DHAP to lysophosphatidic acid (LPA). Also has triacylglycerol (TAG) lipase activity. Involved in the mobilization of the non-polar storage lipids triacylglycerols (TAGs) from lipid particles by hydrolysis of TAGs. Required for spore germination. Plays a role in cell wall biogenesis, but this effect may be indirect by affecting the activities of cell wall synthesis enzymes. Lipolysis of TAG by AYR1 is essential for starvation-induced autophagy. Forms an NADPH-regulated cation-selective channel in the mitochondrial outer membrane. In Saccharomyces cerevisiae (strain ATCC 204508 / S288c) (Baker's yeast), this protein is NADPH-dependent 1-acyldihydroxyacetone phosphate reductase.